Consider the following 363-residue polypeptide: MSSDLKQTPLYQNYVDRGAKIVEFGGWAMPVQFSSIKEEHNAVRYEIGLFDVSHMGEIEVTGKDASQFVQYLLSNDTDNLTTSKALYTALCNEEGGIIDDLVIYKLADDNYLLVVNAANTEKDFNWILKHKEKFDVEVQNVSNQYGQLAIQGPKARDLINQLVDEDVTEMKMFEFKQGVKLFGAIVILSQSGYTGEDGFEIYCNIDDTEKIWDGLLEYNVMPCGLGARDTLRLEAGLPLHGQDLTESITPYEGGIAFASKPLIDADFIGKSVLKDQKENGAPRRTVGLELLEKGIARTGYEVMDLDGNIIGEVTSGTQSPSSGKSIALAMIKRDEFEMGRELLVQVRKRQLKAKIVKKNQIDK.

The protein belongs to the GcvT family. In terms of assembly, the glycine cleavage system is composed of four proteins: P, T, L and H.

The catalysed reaction is N(6)-[(R)-S(8)-aminomethyldihydrolipoyl]-L-lysyl-[protein] + (6S)-5,6,7,8-tetrahydrofolate = N(6)-[(R)-dihydrolipoyl]-L-lysyl-[protein] + (6R)-5,10-methylene-5,6,7,8-tetrahydrofolate + NH4(+). Its function is as follows. The glycine cleavage system catalyzes the degradation of glycine. The protein is Aminomethyltransferase of Staphylococcus aureus (strain MRSA252).